The primary structure comprises 236 residues: tRNA (guanine-N(7)-)-methyltransferase (236 aa).

4 residues coordinate S-adenosyl-L-methionine: Asp-35, Glu-60, Asn-87, and Asp-113. Asp-113 is a catalytic residue. Substrate-binding residues include Lys-117 and Asp-149.

The protein belongs to the class I-like SAM-binding methyltransferase superfamily. TrmB family.

The catalysed reaction is guanosine(46) in tRNA + S-adenosyl-L-methionine = N(7)-methylguanosine(46) in tRNA + S-adenosyl-L-homocysteine. It functions in the pathway tRNA modification; N(7)-methylguanine-tRNA biosynthesis. Catalyzes the formation of N(7)-methylguanine at position 46 (m7G46) in tRNA. The protein is tRNA (guanine-N(7)-)-methyltransferase of Prochlorococcus marinus (strain MIT 9313).